A 664-amino-acid polypeptide reads, in one-letter code: Pentatricopeptide repeat-containing protein At1g10910, chloroplastic (664 aa).

The N-terminal 72 residues, 1–72 (METPLLVGLE…KRHSNSYLAR (72 aa)), are a transit peptide targeting the chloroplast. 9 PPR repeats span residues 165–199 (NVYICNSILSCLVKNGKLDSCIKLFDQMKRDGLKP), 200–235 (DVVTYNTLLAGCIKVKNGYPKAIELIGELPHNGIQM), 236–270 (DSVMYGTVLAICASNGRSEEAENFIQQMKVEGHSP), 271–305 (NIYHYSSLLNSYSWKGDYKKADELMTEMKSIGLVP), 306–340 (NKVMMTTLLKVYIKGGLFDRSRELLSELESAGYAE), 341–375 (NEMPYCMLMDGLSKAGKLEEARSIFDDMKGKGVRS), 376–406 (DGYANSIMISALCRSKRFKEAKELSRDSETT), 411–445 (DLVMLNTMLCAYCRAGEMESVMRMMKKMDEQAVSP), and 446–480 (DYNTFHILIKYFIKEKLHLLAYQTTLDMHSKGHRL).

It belongs to the PPR family. P subfamily.

The protein resides in the plastid. Its subcellular location is the chloroplast. The polypeptide is Pentatricopeptide repeat-containing protein At1g10910, chloroplastic (Arabidopsis thaliana (Mouse-ear cress)).